The primary structure comprises 97 residues: Large ribosomal subunit protein bL28 (97 aa).

This sequence belongs to the bacterial ribosomal protein bL28 family.

In Rickettsia africae (strain ESF-5), this protein is Large ribosomal subunit protein bL28.